The sequence spans 212 residues: UPF0502 protein ECA2523 (212 aa).

It belongs to the UPF0502 family.

The polypeptide is UPF0502 protein ECA2523 (Pectobacterium atrosepticum (strain SCRI 1043 / ATCC BAA-672) (Erwinia carotovora subsp. atroseptica)).